Consider the following 615-residue polypeptide: Crinkler effector protein 15 (615 aa).

Residues 1 to 17 form the signal peptide; that stretch reads MVKLVCAIVGVAGSAFP. Positions 18 to 54 are LQLFLAK domain; sequence VDIDASQLVGDLKKAIKAENAMTFTGDAKDLQLFLAK. The DWL domain stretch occupies residues 55–136; sequence QPVDDESGKE…NMELPSSEQI (82 aa). The HVLVXXP motif signature appears at 137 to 143; the sequence is HVLVVVP. An N-linked (GlcNAc...) asparagine glycan is attached at N531.

It belongs to the Crinkler effector family.

The protein localises to the secreted. The protein resides in the host nucleus. Its function is as follows. Secreted effector that elicits necrosis in host plants, a characteristic of plant innate immunity. The polypeptide is Crinkler effector protein 15 (Phytophthora infestans (Potato late blight agent)).